Here is a 356-residue protein sequence, read N- to C-terminus: S-adenosylmethionine:tRNA ribosyltransferase-isomerase (356 aa).

The protein belongs to the QueA family. Monomer.

Its subcellular location is the cytoplasm. It carries out the reaction 7-aminomethyl-7-carbaguanosine(34) in tRNA + S-adenosyl-L-methionine = epoxyqueuosine(34) in tRNA + adenine + L-methionine + 2 H(+). Its pathway is tRNA modification; tRNA-queuosine biosynthesis. Functionally, transfers and isomerizes the ribose moiety from AdoMet to the 7-aminomethyl group of 7-deazaguanine (preQ1-tRNA) to give epoxyqueuosine (oQ-tRNA). The sequence is that of S-adenosylmethionine:tRNA ribosyltransferase-isomerase from Escherichia coli O127:H6 (strain E2348/69 / EPEC).